The following is a 684-amino-acid chain: Threonine--tRNA ligase (684 aa).

In terms of domain architecture, TGS spans 1–60 (MSISITLHRSGTSRTQQVDTTTTGLDLFGSDRAVVAMRVDGNLVDLQRELHDGAEVEPVE). A catalytic region spans residues 256 to 567 (DHRKLGAELD…LTEHYAGAFP (312 aa)). The Zn(2+) site is built by C361, H412, and H544.

Belongs to the class-II aminoacyl-tRNA synthetase family. In terms of assembly, homodimer. The cofactor is Zn(2+).

It is found in the cytoplasm. It catalyses the reaction tRNA(Thr) + L-threonine + ATP = L-threonyl-tRNA(Thr) + AMP + diphosphate + H(+). Its function is as follows. Catalyzes the attachment of threonine to tRNA(Thr) in a two-step reaction: L-threonine is first activated by ATP to form Thr-AMP and then transferred to the acceptor end of tRNA(Thr). Also edits incorrectly charged L-seryl-tRNA(Thr). The sequence is that of Threonine--tRNA ligase from Cutibacterium acnes (strain DSM 16379 / KPA171202) (Propionibacterium acnes).